The sequence spans 134 residues: NAD(P)H-quinone oxidoreductase subunit 3 (134 aa).

Helical transmembrane passes span 20–40 (GYDAFLGFLLVSAAVPILALV), 78–98 (MFALVFVIFDVETVFLYPWAV), and 103–123 (LGLLAFIEALIFIAILLVALA).

Belongs to the complex I subunit 3 family. NDH-1 can be composed of about 15 different subunits; different subcomplexes with different compositions have been identified which probably have different functions.

Its subcellular location is the cellular thylakoid membrane. It carries out the reaction a plastoquinone + NADH + (n+1) H(+)(in) = a plastoquinol + NAD(+) + n H(+)(out). The enzyme catalyses a plastoquinone + NADPH + (n+1) H(+)(in) = a plastoquinol + NADP(+) + n H(+)(out). In terms of biological role, NDH-1 shuttles electrons from an unknown electron donor, via FMN and iron-sulfur (Fe-S) centers, to quinones in the respiratory and/or the photosynthetic chain. The immediate electron acceptor for the enzyme in this species is believed to be plastoquinone. Couples the redox reaction to proton translocation, and thus conserves the redox energy in a proton gradient. Cyanobacterial NDH-1 also plays a role in inorganic carbon-concentration. The polypeptide is NAD(P)H-quinone oxidoreductase subunit 3 (Prochlorococcus marinus (strain MIT 9303)).